Here is a 578-residue protein sequence, read N- to C-terminus: Zinc finger protein with KRAB and SCAN domains 8 (578 aa).

Residues 1-20 form a disordered region; that stretch reads MAEESRKPSAPSPPDQTPEE. Ser12 carries the phosphoserine modification. Residue Lys26 forms a Glycyl lysine isopeptide (Lys-Gly) (interchain with G-Cter in SUMO2) linkage. The region spanning 51-133 is the SCAN box domain; that stretch reads RLRFRQLCYQ…TLLEDLERQI (83 aa). Residues 158–205 form a disordered region; it reads ASAPEPPNTQLQSEATQHKSPVPQESQERSMSTSQSPTRSQKGSSGDQ. The segment covering 165 to 205 has biased composition (polar residues); sequence NTQLQSEATQHKSPVPQESQERSMSTSQSPTRSQKGSSGDQ. Glycyl lysine isopeptide (Lys-Gly) (interchain with G-Cter in SUMO2) cross-links involve residues Lys176 and Lys199. Ser201 is modified (phosphoserine). Residues 220–316 enclose the KRAB domain; that stretch reads EKIEDMAVSL…GRLERQRGNP (97 aa). Glycyl lysine isopeptide (Lys-Gly) (interchain with G-Cter in SUMO2) cross-links involve residues Lys221, Lys272, and Lys288. 2 C2H2-type zinc fingers span residues 322-344 and 350-372; these read HKCD…WRIH and YQCN…QDIH. Glycyl lysine isopeptide (Lys-Gly) (interchain with G-Cter in SUMO2) cross-links involve residues Lys374 and Lys376. C2H2-type zinc fingers lie at residues 378–400, 406–428, 434–456, 462–484, 490–512, 518–540, and 546–568; these read YHCK…QRIH, YQCN…QRIH, YECN…QRIH, YECD…QRSH, YKCN…QRIH, and YKCK…LRIH. Glycyl lysine isopeptide (Lys-Gly) (interchain with G-Cter in SUMO2) cross-links involve residues Lys413 and Lys441. Residue Lys502 forms a Glycyl lysine isopeptide (Lys-Gly) (interchain with G-Cter in SUMO2) linkage. Lys572 is covalently cross-linked (Glycyl lysine isopeptide (Lys-Gly) (interchain with G-Cter in SUMO2)).

The protein belongs to the krueppel C2H2-type zinc-finger protein family.

The protein localises to the nucleus. Its function is as follows. May be involved in transcriptional regulation. This chain is Zinc finger protein with KRAB and SCAN domains 8 (ZKSCAN8), found in Pan paniscus (Pygmy chimpanzee).